The following is a 462-amino-acid chain: Protoheme IX farnesyltransferase, mitochondrial (462 aa).

The next 7 helical transmembrane spans lie at 152–172 (LTIL…YTVS), 173–193 (LPEL…ANAI), 237–257 (MLFL…IVLY), 269–289 (IINT…GWAA), 296–316 (PGAW…FNAL), 348–368 (SLLM…DWVF), and 411–431 (AKKL…LAML).

Belongs to the UbiA prenyltransferase family.

The protein localises to the mitochondrion membrane. In terms of biological role, converts protoheme IX and farnesyl diphosphate to heme O. This Debaryomyces hansenii (strain ATCC 36239 / CBS 767 / BCRC 21394 / JCM 1990 / NBRC 0083 / IGC 2968) (Yeast) protein is Protoheme IX farnesyltransferase, mitochondrial (COX10).